Consider the following 368-residue polypeptide: Cytochrome P450 119 (368 aa).

Positions 76, 80, 257, 259, 315, and 317 each coordinate heme.

Belongs to the cytochrome P450 family. Requires heme as cofactor.

The protein localises to the cytoplasm. The enzyme catalyses 2 a phenolic donor + H2O2 = 2 a phenolic radical donor + 2 H2O. The endogenous substrate is not known. In vitro, catalyzes the H(2)O(2)-dependent epoxidation of styrene, cis-beta-methylstyrene, and cis-stilbene with retention of stereochemistry. Is able to use cumene hydroperoxide (CHP) or tert-butyl hydroperoxide (TBHP) instead of H(2)O(2) as the electron acceptor. Can also hydroxylate fatty acids such as lauric acid. The protein is Cytochrome P450 119 (cyp119) of Sulfolobus acidocaldarius (strain ATCC 33909 / DSM 639 / JCM 8929 / NBRC 15157 / NCIMB 11770).